A 113-amino-acid chain; its full sequence is Iron-sulfur cluster insertion protein ErpA (113 aa).

Iron-sulfur cluster-binding residues include Cys41, Cys105, and Cys107.

Belongs to the HesB/IscA family. Homodimer. Iron-sulfur cluster is required as a cofactor.

Its function is as follows. Required for insertion of 4Fe-4S clusters for at least IspG. This chain is Iron-sulfur cluster insertion protein ErpA, found in Photobacterium profundum (strain SS9).